The sequence spans 47 residues: Sperm protamine P1 (47 aa).

The protein belongs to the protamine P1 family. In terms of tissue distribution, testis.

It is found in the nucleus. The protein localises to the chromosome. Its function is as follows. Protamines substitute for histones in the chromatin of sperm during the haploid phase of spermatogenesis. They compact sperm DNA into a highly condensed, stable and inactive complex. This is Sperm protamine P1 (PRM1) from Galeopterus variegatus (Malayan flying lemur).